A 418-amino-acid chain; its full sequence is Ankyrin repeat domain-containing protein 61 (418 aa).

ANK repeat units lie at residues 27 to 57 (ALHSRLYEAIIKEDCDTIRTLLRNHPVNQPL), 74 to 103 (QPIFPIHLAAEYRKPQSLLCLLQHGADPEV), 131 to 160 (TRIQKILTDIQNNAVLCLRILCDHGAQVNA), 166 to 195 (NKHSPLHLAITYGTYPVLSFLAQNGAQVNA), 199 to 228 (SSMTPLHMAADILNKNMIETLIACGANVNC), 233 to 272 (TGNTALKLAVCTASSKAGRLLAAGVGCIRLLLNHGAQVNA), 276 to 305 (EGQTALHEACFGGREVIINLLLEFEANVNI), and 309 to 342 (NGESPIYMYLQRSSNIRDVTLLARLLYRTYPLRL).

The chain is Ankyrin repeat domain-containing protein 61 (Ankrd61) from Rattus norvegicus (Rat).